The sequence spans 169 residues: Endoribonuclease YbeY (169 aa).

Residues histidine 135, histidine 139, and histidine 145 each coordinate Zn(2+).

Belongs to the endoribonuclease YbeY family. Requires Zn(2+) as cofactor.

It localises to the cytoplasm. Functionally, single strand-specific metallo-endoribonuclease involved in late-stage 70S ribosome quality control and in maturation of the 3' terminus of the 16S rRNA. This is Endoribonuclease YbeY from Lachnospira eligens (strain ATCC 27750 / DSM 3376 / VPI C15-48 / C15-B4) (Eubacterium eligens).